A 1299-amino-acid chain; its full sequence is MAP3K epsilon protein kinase 1 (1299 aa).

Residues Tyr-20–Ile-274 enclose the Protein kinase domain. HEAT repeat units follow at residues Glu-25–Asn-62 and Leu-86–Ile-125. ATP is bound by residues Ile-26 to Val-34 and Lys-49. Residue Asp-144 is the Proton acceptor of the active site. The HEAT 3 repeat unit spans residues Pro-218–Lys-256. Disordered regions lie at residues Ile-291–Leu-458 and Gly-483–Lys-509. Residues Ser-374 to Ser-385 are compositionally biased toward low complexity. 2 stretches are compositionally biased toward polar residues: residues Ala-415 to His-432 and Ala-488 to Asp-501. HEAT repeat units lie at residues Ser-532–Leu-570, Val-611–Asp-649, Asn-653–Leu-694, Met-698–Leu-736, Asn-743–Leu-780, Asp-781–Asp-820, Gln-868–Gly-900, Leu-901–Ala-939, Ser-955–Thr-994, Tyr-998–Cys-1036, Ala-1043–Arg-1081, Gln-1085–Asn-1122, Glu-1125–Arg-1164, Cys-1186–Thr-1210, Thr-1211–Arg-1249, and Gln-1279–Leu-1299. The tract at residues Val-795–Lys-852 is disordered.

This sequence belongs to the protein kinase superfamily. Ser/Thr protein kinase family. Autophosphorylated. Expressed in both the sporophytic and the gametophytic tissues, especially in dividing cells.

The protein resides in the cytoplasm. The protein localises to the cytoskeleton. Its subcellular location is the microtubule organizing center. It is found in the nucleus. It localises to the nucleolus. The protein resides in the cell membrane. It carries out the reaction L-seryl-[protein] + ATP = O-phospho-L-seryl-[protein] + ADP + H(+). The enzyme catalyses L-threonyl-[protein] + ATP = O-phospho-L-threonyl-[protein] + ADP + H(+). Functionally, serine/threonine-protein kinase involved in the spatial and temporal control system organizing cortical activities in mitotic and postmitotic cells. Required for the normal functioning of the plasma membrane in developing pollen. Involved in the regulation of cell expansion and embryo development. This is MAP3K epsilon protein kinase 1 from Brassica napus (Rape).